The primary structure comprises 67 residues: Archaeal histone HAN1 subunit A (67 aa).

Interaction with DNA stretches follow at residues 20 to 22 and 54 to 57; these read RVS and KTVK.

Belongs to the archaeal histone HMF family. In terms of assembly, heterodimer. Dimers then assemble into higher oligomers, with the DNA wrapped around the protein core.

The protein localises to the cytoplasm. Its subcellular location is the chromosome. In terms of biological role, binds and compact DNA (95 to 150 base pairs) to form nucleosome-like structures that contain positive DNA supercoils. Increases the resistance of DNA to thermal denaturation (in vitro). The polypeptide is Archaeal histone HAN1 subunit A (han1A) (Thermococcus zilligii).